The primary structure comprises 248 residues: Glutathione S-transferase omega-2 (248 aa).

The region spanning 22-101 is the GST N-terminal domain; sequence GVIRIYSMRF…YLDDVFPGRK (80 aa). Cys32 (nucleophile) is an active-site residue. Glutathione contacts are provided by residues Lys59, Val72, and 85 to 86; that span reads ES. The 126-residue stretch at 106–231 folds into the GST C-terminal domain; that stretch reads DPYERARQKM…IFLGFLNLYF (126 aa).

The protein belongs to the GST superfamily. Omega family.

The enzyme catalyses RX + glutathione = an S-substituted glutathione + a halide anion + H(+). It catalyses the reaction L-dehydroascorbate + 2 glutathione = glutathione disulfide + L-ascorbate. The catalysed reaction is methylarsonate + 2 glutathione + H(+) = methylarsonous acid + glutathione disulfide + H2O. Its function is as follows. Exhibits glutathione-dependent thiol transferase activity. Has high dehydroascorbate reductase activity and may contribute to the recycling of ascorbic acid. Participates in the biotransformation of inorganic arsenic and reduces monomethylarsonic acid (MMA). The sequence is that of Glutathione S-transferase omega-2 (Gsto2) from Rattus norvegicus (Rat).